We begin with the raw amino-acid sequence, 289 residues long: MKDRLEQLKAKQLTQDDDTDEVEIAIDNTAFMDEFFSEIEETRLNIDKISEHVEEAKKLYSIILSAPIPEPKTKDDLEQLTTEIKKRANNVRNKLKSMEKHIEEDEVRSSADLRIRKSQHSVLSRKFVEVMTKYNEAQVDFRERSKGRIQRQLEITGKKTTDEELEEMLESGNPAIFTSGIIDSQISKQALSEIEGRHKDIVRLESSIKELHDMFMDIAMLVENQGEMLDNIELNVMHTVDHVEKARDETKRAMKYQGQARKKLIIIIVIVVVLLGILALIIGLSVGLK.

Residues 1 to 263 (MKDRLEQLKA…MKYQGQARKK (263 aa)) are Cytoplasmic-facing. The stretch at 32–111 (MDEFFSEIEE…IEEDEVRSSA (80 aa)) forms a coiled coil. A t-SNARE coiled-coil homology domain is found at 191–253 (LSEIEGRHKD…EKARDETKRA (63 aa)). A helical; Anchor for type IV membrane protein membrane pass occupies residues 264–284 (LIIIIVIVVVLLGILALIIGL). At 285-289 (SVGLK) the chain is on the extracellular side.

It belongs to the syntaxin family. Interacts with REEP6. Interacts with PRPH2 in rod and cone photoreceptors. Interacts with ROM1. Interacts with SNAP25. Interacts with VAMP2. Heart, spleen, lung and kidney.

It is found in the membrane. Potentially involved in docking of synaptic vesicles at presynaptic active zones. Apical receptor involved in membrane fusion of apical vesicles. Essential for survival of retinal photoreceetors. This is Syntaxin-3 (Stx3) from Rattus norvegicus (Rat).